A 688-amino-acid polypeptide reads, in one-letter code: Envelope glycoprotein gp70 (688 aa).

Over residues Met-1–Leu-15 the composition is skewed to polar residues. Residues Met-1 to Arg-37 form a disordered region. A signal peptide spans Met-1–Gly-98. Positions Lys-20–Arg-37 are enriched in basic residues. Residues Glu-99–Tyr-624 are Extracellular-facing. Residues Asn-127 and Asn-143 are each glycosylated (N-linked (GlcNAc...) asparagine; by host). Positions Leu-426 to Ser-474 form a coiled coil. Positions Lys-455–Arg-456 are excised as a propeptide. Residues Phe-457–Val-477 form a fusion peptide region. The immunosuppression stretch occupies residues Leu-463–Ala-481. Asn-498 carries N-linked (GlcNAc...) asparagine; by host glycosylation. Residues Leu-511–Arg-541 adopt a coiled-coil conformation. The N-linked (GlcNAc...) asparagine; by host glycan is linked to Asn-557. A helical membrane pass occupies residues Phe-625–Val-645. Over Phe-646–Thr-688 the chain is Cytoplasmic.

The mature envelope protein (Env) consists of a trimer of SU-TM heterodimers attached by noncovalent interactions or by a labile interchain disulfide bond. Specific enzymatic cleavages in vivo yield mature proteins. Envelope glycoproteins are synthesized as an inactive precursor that is N-glycosylated and processed likely by host cell furin or by a furin-like protease in the Golgi to yield the mature SU and TM proteins. The cleavage site between SU and TM requires the minimal sequence [KR]-X-[KR]-R.

It localises to the virion membrane. Its subcellular location is the host cell membrane. In terms of biological role, the surface protein (SU) attaches the virus to the host cell by binding to its receptor. This interaction triggers the refolding of the transmembrane protein (TM) and is thought to activate its fusogenic potential by unmasking its fusion peptide. Fusion occurs at the host cell plasma membrane. The transmembrane protein (TM) acts as a class I viral fusion protein. Under the current model, the protein has at least 3 conformational states: pre-fusion native state, pre-hairpin intermediate state, and post-fusion hairpin state. During viral and target cell membrane fusion, the coiled coil regions (heptad repeats) assume a trimer-of-hairpins structure, positioning the fusion peptide in close proximity to the C-terminal region of the ectodomain. The formation of this structure appears to drive apposition and subsequent fusion of viral and target cell membranes. Membranes fusion leads to delivery of the nucleocapsid into the cytoplasm. This is Envelope glycoprotein gp70 (env) from Mouse mammary tumor virus (strain BR6) (MMTV).